Here is a 356-residue protein sequence, read N- to C-terminus: Phospho-N-acetylmuramoyl-pentapeptide-transferase (356 aa).

Helical transmembrane passes span 4 to 24 (ILLAGAVSMIGTLVGTRWFIH), 53 to 73 (GGAVIIVSVLLAYLVAHLVTW), 76 to 96 (PSISALLVLWLFSGLGFIGFL), 116 to 136 (LLGQAFVAITFAIGVMYFPDV), 152 to 172 (ISWLYLPVWLGIVWVILLIAG), 186 to 206 (LATGASTMVFGAYTVLSIWQF), 228 to 248 (DIAVVAIAIAGACFGFLWWNA), 253 to 273 (IFLGDTGSLALGGAVAGMAVV), 278 to 298 (LLLVIIGALFVIETVSVMLQV), and 333 to 353 (FWIICGLAVSAGLGIFYAEWV).

This sequence belongs to the glycosyltransferase 4 family. MraY subfamily. Mg(2+) serves as cofactor.

Its subcellular location is the cell membrane. The catalysed reaction is UDP-N-acetyl-alpha-D-muramoyl-L-alanyl-gamma-D-glutamyl-meso-2,6-diaminopimeloyl-D-alanyl-D-alanine + di-trans,octa-cis-undecaprenyl phosphate = di-trans,octa-cis-undecaprenyl diphospho-N-acetyl-alpha-D-muramoyl-L-alanyl-D-glutamyl-meso-2,6-diaminopimeloyl-D-alanyl-D-alanine + UMP. It functions in the pathway cell wall biogenesis; peptidoglycan biosynthesis. Catalyzes the initial step of the lipid cycle reactions in the biosynthesis of the cell wall peptidoglycan: transfers peptidoglycan precursor phospho-MurNAc-pentapeptide from UDP-MurNAc-pentapeptide onto the lipid carrier undecaprenyl phosphate, yielding undecaprenyl-pyrophosphoryl-MurNAc-pentapeptide, known as lipid I. The protein is Phospho-N-acetylmuramoyl-pentapeptide-transferase of Cutibacterium acnes (strain DSM 16379 / KPA171202) (Propionibacterium acnes).